The chain runs to 444 residues: Ribulose bisphosphate carboxylase large chain (444 aa).

Lys-5 bears the N6,N6,N6-trimethyllysine mark. Asn-114 and Thr-164 together coordinate substrate. The active-site Proton acceptor is the Lys-166. Lys-168 is a substrate binding site. Mg(2+) contacts are provided by Lys-192, Asp-194, and Glu-195. Lys-192 carries the post-translational modification N6-carboxylysine. His-285 functions as the Proton acceptor in the catalytic mechanism. Substrate-binding residues include Arg-286, His-318, and Ser-370.

The protein belongs to the RuBisCO large chain family. Type I subfamily. Heterohexadecamer of 8 large chains and 8 small chains; disulfide-linked. The disulfide link is formed within the large subunit homodimers. The cofactor is Mg(2+). The disulfide bond which can form in the large chain dimeric partners within the hexadecamer appears to be associated with oxidative stress and protein turnover.

Its subcellular location is the plastid. The protein resides in the chloroplast. It carries out the reaction 2 (2R)-3-phosphoglycerate + 2 H(+) = D-ribulose 1,5-bisphosphate + CO2 + H2O. The catalysed reaction is D-ribulose 1,5-bisphosphate + O2 = 2-phosphoglycolate + (2R)-3-phosphoglycerate + 2 H(+). RuBisCO catalyzes two reactions: the carboxylation of D-ribulose 1,5-bisphosphate, the primary event in carbon dioxide fixation, as well as the oxidative fragmentation of the pentose substrate in the photorespiration process. Both reactions occur simultaneously and in competition at the same active site. The protein is Ribulose bisphosphate carboxylase large chain of Ginkgo biloba (Ginkgo).